The sequence spans 422 residues: Protein phosphatase 1 regulatory subunit 36 (422 aa).

As to quaternary structure, interacts with PPP1CA.

Its function is as follows. Inhibits phosphatase activity of protein phosphatase 1 (PP1) complexes. The sequence is that of Protein phosphatase 1 regulatory subunit 36 (PPP1R36) from Homo sapiens (Human).